The following is a 594-amino-acid chain: Elongation factor 4 (594 aa).

The 183-residue stretch at 2-184 (KNIRNFSIIA…TIVAKVPAPE (183 aa)) folds into the tr-type G domain. Residues 14-19 (DHGKST) and 131-134 (NKID) contribute to the GTP site.

The protein belongs to the TRAFAC class translation factor GTPase superfamily. Classic translation factor GTPase family. LepA subfamily.

Its subcellular location is the cell inner membrane. The catalysed reaction is GTP + H2O = GDP + phosphate + H(+). Its function is as follows. Required for accurate and efficient protein synthesis under certain stress conditions. May act as a fidelity factor of the translation reaction, by catalyzing a one-codon backward translocation of tRNAs on improperly translocated ribosomes. Back-translocation proceeds from a post-translocation (POST) complex to a pre-translocation (PRE) complex, thus giving elongation factor G a second chance to translocate the tRNAs correctly. Binds to ribosomes in a GTP-dependent manner. This chain is Elongation factor 4, found in Francisella tularensis subsp. tularensis (strain FSC 198).